Here is a 141-residue protein sequence, read N- to C-terminus: Large ribosomal subunit protein uL11 (141 aa).

Belongs to the universal ribosomal protein uL11 family. As to quaternary structure, part of the ribosomal stalk of the 50S ribosomal subunit. Interacts with L10 and the large rRNA to form the base of the stalk. L10 forms an elongated spine to which L12 dimers bind in a sequential fashion forming a multimeric L10(L12)X complex. In terms of processing, one or more lysine residues are methylated.

Its function is as follows. Forms part of the ribosomal stalk which helps the ribosome interact with GTP-bound translation factors. This is Large ribosomal subunit protein uL11 from Clostridium botulinum (strain Alaska E43 / Type E3).